The primary structure comprises 798 residues: Acetyl-CoA decarbonylase/synthase complex subunit alpha 2 (798 aa).

6 residues coordinate [4Fe-4S] cluster: Cys-65, Cys-68, Cys-69, Cys-71, Cys-76, and Cys-86. His-109 is a CO binding site. Positions 246, 274, and 313 each coordinate [Ni-4Fe-4S] cluster. 4Fe-4S ferredoxin-type domains lie at 395 to 424 (EEQFMEYARACTQCGNCTIACPQGIRIGEA) and 434 to 463 (SKLEKEWDVCIACGRCEQVCPKGIPIIDMY). Positions 405, 408, 411, 415, 443, 446, 449, and 453 each coordinate [4Fe-4S] cluster. Positions 511, 540, and 575 each coordinate [Ni-4Fe-4S] cluster.

Belongs to the Ni-containing carbon monoxide dehydrogenase family. As to quaternary structure, heterotetramer of two alpha and two epsilon subunits. The ACDS complex is made up of alpha, epsilon, beta, gamma and delta subunits with a probable stoichiometry of (alpha(2)epsilon(2))(4)-beta(8)-(gamma(1)delta(1))(8). It depends on [4Fe-4S] cluster as a cofactor. [Ni-4Fe-4S] cluster serves as cofactor.

The catalysed reaction is CO + 2 oxidized [2Fe-2S]-[ferredoxin] + H2O = 2 reduced [2Fe-2S]-[ferredoxin] + CO2 + 2 H(+). Part of the ACDS complex that catalyzes the reversible cleavage of acetyl-CoA, allowing autotrophic growth from CO(2). The alpha-epsilon subcomponent functions as a carbon monoxide dehydrogenase. This Archaeoglobus fulgidus (strain ATCC 49558 / DSM 4304 / JCM 9628 / NBRC 100126 / VC-16) protein is Acetyl-CoA decarbonylase/synthase complex subunit alpha 2.